Consider the following 145-residue polypeptide: Leptin (145 aa).

Cys95 and Cys145 are disulfide-bonded.

The protein belongs to the leptin family.

The protein localises to the secreted. Functionally, key player in the regulation of energy balance and body weight control. Once released into the circulation, has central and peripheral effects by binding LEPR, found in many tissues, which results in the activation of several major signaling pathways. The polypeptide is Leptin (LEP) (Meleagris gallopavo (Wild turkey)).